Consider the following 210-residue polypeptide: MARRSQGTKLHLAVLCLVVSCHAIGLSDLMERASQRSDKLHSLSTSLTKDLDSHFPPMGRVMMPRPSMCHTSSLQTPKDKEQALRVSENELISLARSLLLAWNDPLLLLSSEAPTLPHPSNGDISSKIRELQDYSKSLGDGLDILVNKMGPSSQYISSIPFKGGDLGNDKTSRLINFHFLMSCFRRDSHKIDSFLKVLRCRATKMRPETC.

Residues methionine 1–alanine 23 form the signal peptide. 2 disulfide bridges follow: cysteine 69/cysteine 183 and cysteine 200/cysteine 210.

Belongs to the somatotropin/prolactin family. Pituitary gland.

The protein resides in the secreted. This Coregonus autumnalis (Arctic cisco) protein is Prolactin (prl).